A 273-amino-acid chain; its full sequence is Oligodendrocyte transcription factor 3 (273 aa).

Positions 1–14 (MNSDSSSVSSRASS) are enriched in low complexity. The disordered stretch occupies residues 1 to 72 (MNSDSSSVSS…KAAGESSKYK (72 aa)). Over residues 24-34 (DHHHRHHHHHQ) the composition is skewed to basic residues. The span at 37–47 (RLNSVSSTQGD) shows a compositional bias: polar residues. A coiled-coil region spans residues 69 to 90 (SKYKIKKQLSEQDLQQLRLKIN). The bHLH domain occupies 84-138 (QLRLKINGRERKRMHDLNLAMDGLREVMPYAHGPSVRKLSKIATLLLARNYILML).

In terms of tissue distribution, weakly expressed, mainly in non-neural tissues.

Its subcellular location is the nucleus. In terms of biological role, may determine the distinct specification program of class A neurons in the dorsal part of the spinal cord and suppress specification of class B neurons. This Mus musculus (Mouse) protein is Oligodendrocyte transcription factor 3 (Olig3).